We begin with the raw amino-acid sequence, 166 residues long: Small ribosomal subunit protein uS5 (166 aa).

One can recognise an S5 DRBM domain in the interval 11-74 (LQEKLVQVNR…EAARKNMVDV (64 aa)).

It belongs to the universal ribosomal protein uS5 family. As to quaternary structure, part of the 30S ribosomal subunit. Contacts proteins S4 and S8.

In terms of biological role, with S4 and S12 plays an important role in translational accuracy. Functionally, located at the back of the 30S subunit body where it stabilizes the conformation of the head with respect to the body. The protein is Small ribosomal subunit protein uS5 of Marinobacter nauticus (strain ATCC 700491 / DSM 11845 / VT8) (Marinobacter aquaeolei).